The primary structure comprises 600 residues: Ligand-dependent nuclear receptor corepressor-like protein (600 aa).

Disordered stretches follow at residues 1–24, 102–122, and 495–519; these read MEKGTDRMAAAAPAPPAAASQCRS, SVIGSSQSTPTEELSSQGQSN, and DGTSENTEDSLDRKDNKQPRKKRGR. The span at 104 to 122 shows a compositional bias: polar residues; sequence IGSSQSTPTEELSSQGQSN. Positions 514–566 constitute an HTH psq-type domain; the sequence is RKKRGRYRQYDHEIMEEAIAMVMSGKMSVSKAQGIYGVPHSTLEYKVKERSGT. Residues 542–562 constitute a DNA-binding region (H-T-H motif); sequence VSKAQGIYGVPHSTLEYKVKE. The segment at 581 to 600 is disordered; sequence GLFNMTDSGTGSCKTSSKPV. Residues 583 to 600 are compositionally biased toward polar residues; sequence FNMTDSGTGSCKTSSKPV.

The protein localises to the nucleus. May act as transcription activator that binds DNA elements with the sequence 5'-CCCTATCGATCGATCTCTACCT-3'. The chain is Ligand-dependent nuclear receptor corepressor-like protein (LCORL) from Gallus gallus (Chicken).